A 57-amino-acid chain; its full sequence is Large ribosomal subunit protein bL32 (57 aa).

The protein belongs to the bacterial ribosomal protein bL32 family.

The sequence is that of Large ribosomal subunit protein bL32 from Bacillus anthracis (strain A0248).